The primary structure comprises 663 residues: Leishmanolysin-like peptidase (663 aa).

Zn(2+) is bound at residue His-246. Glu-247 is an active-site residue. Residues His-250 and His-353 each contribute to the Zn(2+) site.

Belongs to the peptidase M8 family. Zn(2+) serves as cofactor.

Its subcellular location is the cytoplasm. Its function is as follows. Metalloprotease. The sequence is that of Leishmanolysin-like peptidase from Caenorhabditis briggsae.